The primary structure comprises 274 residues: 2,3,4,5-tetrahydropyridine-2,6-dicarboxylate N-succinyltransferase (274 aa).

Residues arginine 104 and aspartate 141 each coordinate substrate.

The protein belongs to the transferase hexapeptide repeat family. As to quaternary structure, homotrimer.

The protein resides in the cytoplasm. The catalysed reaction is (S)-2,3,4,5-tetrahydrodipicolinate + succinyl-CoA + H2O = (S)-2-succinylamino-6-oxoheptanedioate + CoA. It participates in amino-acid biosynthesis; L-lysine biosynthesis via DAP pathway; LL-2,6-diaminopimelate from (S)-tetrahydrodipicolinate (succinylase route): step 1/3. The polypeptide is 2,3,4,5-tetrahydropyridine-2,6-dicarboxylate N-succinyltransferase (Shewanella denitrificans (strain OS217 / ATCC BAA-1090 / DSM 15013)).